The primary structure comprises 936 residues: MDGEMAIIESSNHVGTSSPTTETQFTIDSSALKDQETKESITNSPTSEVPIETKLPKSSDIVTEEKHPQNTTTDIENEVENPVTDDNGNLKLELPDNLDNADFSKLLEFDAKNDEALFNSNELLSHTMDPVNNIDLTHDHSREVSSKEDINIEPVNPDEDEREKTQDNTAAVKTEGIRNSEDTSIQKDEPTADAIYTDVHKLSVNKDTETLPTLVDEKNNMLHMRNNSITPIMFQQHELVGQPPQNTVTENNSTDAETTQRKLSEPIDASLPLPNEQPTIFAYARLDFQSFTFYVQTLHAIIGRRSENDFSHKVDVNLGPSKSISRRHAQIFYNFGTGRFELSIIGKNGAFVDDIFVEKGNTVPLRNKTKIQIGQIPFQFILPEQERNDDSKSPENADIAESEINTRNLKKNEPKSKKKITTGAKPKKAQTKPAVKKEKKPPKIPKKVYTLEEIPVEYRTKPTVSYSAMLTTCIRKYSTAKGMSLSEIYAGIRELFPYYKYCPDGWQSSVRHNLSLNKSFRKVSKEGKGWLWGLDEEYIAERERQKKKQSEIAVAKAQAAQLKLEQQQHKLQQVPQRGKKDIVSQRSNVNARKQNISQTLAANRAASNRKNTASDNQRTMKYLQEQLVILTRDRKGLSKQVIAAILTQALAMTINQVTQAAKNKGITGNPLTALMDKNPQHLNLILAAAVNAATAKVTKGEVKQLVNPETTAAAALAAKAQHSKPIRQPIVQTPHVPDRPPSQLSASASSHPNNYLHDKQPGSFDPSSLSRFFQPRQNARATSSVAATSVPAAASQNVDAQPKPKPAQDNDLESESGTSSSSSSSSESGSESDSGSDDGSASGSGDNSSTSSESESESDSGSEVDEKNNKNEKIDSESIKNNESKDDIPSKDENSSNDNREISKTDEEGHDSKRRKVSEDINEGITEVNVSLEEKL.

2 disordered regions span residues 1–90 (MDGE…NGNL) and 139–169 (DHSR…QDNT). Residues 9–29 (ESSNHVGTSSPTTETQFTIDS) are compositionally biased toward polar residues. Ser44 carries the post-translational modification Phosphoserine. The span at 139-150 (DHSREVSSKEDI) shows a compositional bias: basic and acidic residues. The residue at position 228 (Ser228) is a Phosphoserine. A phosphothreonine mark is found at Thr230 and Thr247. The segment covering 243 to 257 (PPQNTVTENNSTDAE) has biased composition (polar residues). The disordered stretch occupies residues 243 to 270 (PPQNTVTENNSTDAETTQRKLSEPIDAS). Position 264 is a phosphoserine (Ser264). Positions 300-357 (AIIGRRSENDFSHKVDVNLGPSKSISRRHAQIFYNFGTGRFELSIIGKNGAFVDDIFV) constitute an FHA domain. Over residues 384 to 395 (EQERNDDSKSPE) the composition is skewed to basic and acidic residues. The tract at residues 384–442 (EQERNDDSKSPENADIAESEINTRNLKKNEPKSKKKITTGAKPKKAQTKPAVKKEKKPP) is disordered. Over residues 416–430 (SKKKITTGAKPKKAQ) the composition is skewed to basic residues. A DNA-binding region (fork-head) is located at residues 460-552 (TKPTVSYSAM…ERQKKKQSEI (93 aa)). The disordered stretch occupies residues 718 to 936 (AKAQHSKPIR…EVNVSLEEKL (219 aa)). Polar residues-rich tracts occupy residues 742-753 (SQLSASASSHPN) and 765-777 (DPSS…QPRQ). 2 stretches are compositionally biased toward low complexity: residues 779–795 (ARAT…AAAS) and 815–853 (ESGT…TSSE). Acidic residues predominate over residues 854–863 (SESESDSGSE). The segment covering 864 to 911 (VDEKNNKNEKIDSESIKNNESKDDIPSKDENSSNDNREISKTDEEGHD) has biased composition (basic and acidic residues).

It localises to the nucleus. In terms of biological role, acts as a transcriptional regulator that recruits coactivator IFH1 to the promoters of ribosomal protein genes. Recruited to ribosomal gene promoters by RAP1. This is Pre-rRNA-processing protein FHL1 (FHL1) from Saccharomyces cerevisiae (strain ATCC 204508 / S288c) (Baker's yeast).